Consider the following 206-residue polypeptide: Small ribosomal subunit protein uS4 (206 aa).

Residues 18 to 46 (NIWGRPKSPVNRREYGPGQHGQRRKGKLS) are disordered. An S4 RNA-binding domain is found at 94–156 (RRLDAVVYRA…SKQNVAVLEA (63 aa)).

It belongs to the universal ribosomal protein uS4 family. As to quaternary structure, part of the 30S ribosomal subunit. Contacts protein S5. The interaction surface between S4 and S5 is involved in control of translational fidelity.

Functionally, one of the primary rRNA binding proteins, it binds directly to 16S rRNA where it nucleates assembly of the body of the 30S subunit. Its function is as follows. With S5 and S12 plays an important role in translational accuracy. In Ruegeria sp. (strain TM1040) (Silicibacter sp.), this protein is Small ribosomal subunit protein uS4.